The following is a 94-amino-acid chain: Integration host factor subunit beta (94 aa).

This sequence belongs to the bacterial histone-like protein family. In terms of assembly, heterodimer of an alpha and a beta chain.

Functionally, this protein is one of the two subunits of integration host factor, a specific DNA-binding protein that functions in genetic recombination as well as in transcriptional and translational control. In Mesorhizobium japonicum (strain LMG 29417 / CECT 9101 / MAFF 303099) (Mesorhizobium loti (strain MAFF 303099)), this protein is Integration host factor subunit beta.